The chain runs to 281 residues: Oxidase pynE (281 aa).

Belongs to the avfA family.

The protein operates within secondary metabolite biosynthesis. Oxidase; part of the gene cluster that mediates the biosynthesis of pyranonigrins, a family of antioxidative compounds. The first step of pyranonigrins biosynthesis is performed by the hybrid PKS-NRPS synthetase that condenses 6 malonyl-CoA units to an acetyl starter unit, to form a 1,3,5-trioxotetradecane-6,8-dienyl-ACP. The enoyl reductase (ER) domain of pynA is likely to be functional during the first two rounds of polyketide chain extension, to generate the saturated C-C bonds of the alkyl side chain. PynA subsequently forms the amide bond between the acyl chain and L-serine. Although pynA has a terminal reductase domain, it appears to require the thioesterase pynI for the release of the straight-chain intermediate from pynA via the formation of a tetramic acid pyranonigrin J. The methyltransferase pynC then coverts pyranonigrin J to pyranonigrin I via N-methylation. The FAD-dependent monooxygenase pynG catalyzes an epoxidation-mediated cyclization to form the dihydro-gamma-pyrone moiety, followed by pynD-catalyzed oxidation of the alcohol to the ketone and enolization to yield the characteristic tetramic acid-fused gamma-pyrone core of pyranonigrin H. Pyranonigrin H is substrate of pynH for dehydration-mediated exo-methylene formation from the serine side chain to produce pyranonigrin E, before the oxidase pynE reduces the exo-methylene of pyranonigrin E into a pendant methyl to form pyranonigrin G. The FAD-linked oxidoreductase pynB performs the reverse reaction and converts pyranonigrin G back to pyranonigrin E. The chain is Oxidase pynE from Aspergillus niger (strain ATCC MYA-4892 / CBS 513.88 / FGSC A1513).